The sequence spans 204 residues: Probable GTP-binding protein EngB (204 aa).

Positions 23 to 195 (TLPEIAFVGR…ASALMQLLAM (173 aa)) constitute an EngB-type G domain. GTP is bound by residues 31–38 (GRSNVGKS), 58–62 (GRTRE), 76–79 (DLPG), 143–146 (TKID), and 174–176 (FSA). The Mg(2+) site is built by Ser38 and Thr60.

The protein belongs to the TRAFAC class TrmE-Era-EngA-EngB-Septin-like GTPase superfamily. EngB GTPase family. Mg(2+) serves as cofactor.

Its function is as follows. Necessary for normal cell division and for the maintenance of normal septation. The sequence is that of Probable GTP-binding protein EngB from Gemmatimonas aurantiaca (strain DSM 14586 / JCM 11422 / NBRC 100505 / T-27).